The primary structure comprises 198 residues: MVESKNTELSQGTWLNKPKSVFQEAGKVTLETDEKTDFWRETFYGFTRDSGHFLGVETGSAFTAQVRVQGSYESLYDQAGIMVRIDDGHWLKAGIEISDGHAMLSSVLTNGKSDWSTAVYGGNARDFWLRVTVEKGVLRIQVSSDKKTWPLVRLAPFPTSDHYLVGPMACTPERGGLKVTFSEWSLTAPLGKALHDLS.

The protein resides in the cytoplasm. In terms of biological role, functions in the galactose metabolic pathway via the GAL83 protein and that it may control the level of ENO1. This chain is Regulation of enolase protein 1 (REE1), found in Saccharomyces cerevisiae (strain ATCC 204508 / S288c) (Baker's yeast).